A 313-amino-acid polypeptide reads, in one-letter code: Putative adhesin P1-like protein MPN_202 (313 aa).

Low complexity predominate over residues 1–16; that stretch reads MGSQNQGSTTTTSAGN. Residues 1 to 44 form a disordered region; the sequence is MGSQNQGSTTTTSAGNPDSLVTDKVDQKGQVQTSGQNLSDTNYT. Residues 29–44 are compositionally biased toward polar residues; sequence GQVQTSGQNLSDTNYT.

The protein belongs to the adhesin P1 family.

This Mycoplasma pneumoniae (strain ATCC 29342 / M129 / Subtype 1) (Mycoplasmoides pneumoniae) protein is Putative adhesin P1-like protein MPN_202.